An 878-amino-acid chain; its full sequence is MSKVHNSEYIQELSVDNTSYKIYDINKAASDIDLPLKKLPYSLRVLFENVLRSNGSKQSLLVFKEWLKTKKSDAEIDFMPARVLMQDFTGVPAIVDLAAMRDAMKKIGGDPLKINPLIPVDLVIDHSVSVDSYAAKDSFNKNVQMEMKRNIERYAFLKWGQQAFNNFKVVPPGTGICHQVNLEYLAKVVWHKDGTLYPDSLVGTDSHTTMVNGLSVLGWGVGGIEAEAAMLGQPLTMILPEVIGVKLTGKLTGIATATDLVLTVTEMLRKKKVVGKFVEFFGEGLKNLMIADRATISNMSPEYGATCGFFPIDQETIKYLELTGREKTQIRLVEQYATEQNLWYDFEHAVEYTEVLELDLSMVHGSLAGPKRPQDRVNLNDVASNFKYELPNFALDNKDIDKKYAVANQNYEIGNGDVVIAAITSCTNTSNPSVMIGAALLAKKALEHGLKVKPWVKTSLAPGSKVVTEYLKLSGLDKYLDELGFNLVGYGCTTCIGNSGPLNPEIEETINKNGLVVASVLSGNRNFEGRINPLTKASYLGSPILVVAYALSGTLNIDLTNMPIGENIYLKDLWPSKEEIDEVIANSINSSMFIEKYSDIFSGTKEWKDLQVTNSSTYNWNKNSTYINNPPYFKDIGSKNNIQDIKSAKILAILGDSITTDHISPAGSISKTSPAAKYLTDHHIEPLDFNSYGSRRGNHEVMMRGTFANIRIKNEMCKGVEGGFTINQLNGTQQTIYDAAMDYKAHDVSVVIFAGKEYGSGSSRDWAAKGPGLLGVKAVIAESFERIHRSNLVGMGILPLTFTGNNTRLDLKLDGSETIDITGLSENISSYHPVKCVIKKQTGAIRTIDLILQIFTDNEINYIKHGSIMHFVVESLKG.

[4Fe-4S] cluster-binding residues include C426, C492, and C495.

Belongs to the aconitase/IPM isomerase family. In terms of assembly, monomer. It depends on [4Fe-4S] cluster as a cofactor.

It carries out the reaction citrate = D-threo-isocitrate. It catalyses the reaction (2S,3R)-3-hydroxybutane-1,2,3-tricarboxylate = 2-methyl-cis-aconitate + H2O. Its pathway is carbohydrate metabolism; tricarboxylic acid cycle; isocitrate from oxaloacetate: step 2/2. The protein operates within organic acid metabolism; propanoate degradation. Its function is as follows. Involved in the catabolism of short chain fatty acids (SCFA) via the tricarboxylic acid (TCA)(acetyl degradation route) and probably the 2-methylcitrate cycle I (propionate degradation route). Catalyzes the reversible isomerization of citrate to isocitrate via cis-aconitate. Could catalyze the hydration of 2-methyl-cis-aconitate to yield (2R,3S)-2-methylisocitrate. The apo form of AcnA functions as a RNA-binding regulatory protein. The protein is Aconitate hydratase A (acnA) of Rickettsia conorii (strain ATCC VR-613 / Malish 7).